Reading from the N-terminus, the 1499-residue chain is MMANWAEARPLLILIVLLGQFVSIKAQEEDEDEGYGEEIACTQNGQMYLNRDIWKPAPCQICVCDNGAILCDKIECQDVLDCADPVTPPGECCPVCSQTPGGGNTNFGRGRKGQKGEPGLVPVVTGIRGRPGPAGPPGSQGPRGERGPKGRPGPRGPQGIDGEPGVPGQPGAPGPPGHPSHPGPDGLSRPFSAQMAGLDEKSGLGSQVGLMPGSVGPVGPRGPQGLQGQQGGAGPTGPPGEPGDPGPMGPIGSRGPEGPPGKPGEDGEPGRNGNPGEVGFAGSPGARGFPGAPGLPGLKGHRGHKGLEGPKGEVGAPGSKGEAGPTGPMGAMGPLGPRGMPGERGRLGPQGAPGQRGAHGMPGKPGPMGPLGIPGSSGFPGNPGMKGEAGPTGARGPEGPQGQRGETGPPGPVGSPGLPGAIGTDGTPGAKGPTGSPGTSGPPGSAGPPGSPGPQGSTGPQGIRGQPGDPGVPGFKGEAGPKGEPGPHGIQGPIGPPGEEGKRGPRGDPGTVGPPGPVGERGAPGNRGFPGSDGLPGPKGAQGERGPVGSSGPKGSQGDPGRPGEPGLPGARGLTGNPGVQGPEGKLGPLGAPGEDGRPGPPGSIGIRGQPGSMGLPGPKGSSGDPGKPGEAGNAGVPGQRGAPGKDGEVGPSGPVGPPGLAGERGEQGPPGPTGFQGLPGPPGPPGEGGKPGDQGVPGDPGAVGPLGPRGERGNPGERGEPGITGLPGEKGMAGGHGPDGPKGSPGPSGTPGDTGPPGLQGMPGERGIAGTPGPKGDRGGIGEKGAEGTAGNDGARGLPGPLGPPGPAGPTGEKGEPGPRGLVGPPGSRGNPGSRGENGPTGAVGFAGPQGPDGQPGVKGEPGEPGQKGDAGSPGPQGLAGSPGPHGPNGVPGLKGGRGTQGPPGATGFPGSAGRVGPPGPAGAPGPAGPLGEPGKEGPPGLRGDPGSHGRVGDRGPAGPPGGPGDKGDPGEDGQPGPDGPPGPAGTTGQRGIVGMPGQRGERGMPGLPGPAGTPGKVGPTGATGDKGPPGPVGPPGSNGPVGEPGPEGPAGNDGTPGRDGAVGERGDRGDPGPAGLPGSQGAPGTPGPVGAPGDAGQRGDPGSRGPIGPPGRAGKRGLPGPQGPRGDKGDHGDRGDRGQKGHRGFTGLQGLPGPPGPNGEQGSAGIPGPFGPRGPPGPVGPSGKEGNPGPLGPIGPPGVRGSVGEAGPEGPPGEPGPPGPPGPPGHLTAALGDIMGHYDESMPDPLPEFTEDQAAPDDKNKTDPGVHATLKSLSSQIETMRSPDGSKKHPARTCDDLKLCHSAKQSGEYWIDPNQGSVEDAIKVYCNMETGETCISANPSSVPRKTWWASKSPDNKPVWYGLDMNRGSQFAYGDHQSPNTAITQMTFLRLLSKEASQNITYICKNSVGYMDDQAKNLKKAVVLKGANDLDIKAEGNIRFRYIVLQDTCSKRNGNVGKTVFEYRTQNVARLPIIDLAPVDVGGTDQEFGVEIGPVCFV.

The signal sequence occupies residues 1–26; sequence MMANWAEARPLLILIVLLGQFVSIKA. The region spanning 39-97 is the VWFC domain; the sequence is IACTQNGQMYLNRDIWKPAPCQICVCDNGAILCDKIECQDVLDCADPVTPPGECCPVCS. The disordered stretch occupies residues 104–1268; the sequence is NTNFGRGRKG…DDKNKTDPGV (1165 aa). Residues 170–182 are compositionally biased toward pro residues; it reads PGAPGPPGHPSHP. Residues 212–227 show a composition bias toward low complexity; it reads PGSVGPVGPRGPQGLQ. Pro residues predominate over residues 236–248; that stretch reads TGPPGEPGDPGPM. Residues P290, P293, and P296 each carry the hydroxyproline modification. Composition is skewed to low complexity over residues 322 to 340 and 427 to 443; these read EAGP…PRGM and TPGA…SGPP. Positions 506–508 match the Cell attachment site motif; that stretch reads RGD. Low complexity-rich tracts occupy residues 604–626 and 694–709; these read SIGI…SGDP and DQGV…PLGP. P611 and P617 each carry hydroxyproline. Residues 710 to 721 show a composition bias toward basic and acidic residues; it reads RGERGNPGERGE. A compositionally biased stretch (gly residues) spans 732-741; that stretch reads GMAGGHGPDG. The segment covering 742–758 has biased composition (low complexity); the sequence is PKGSPGPSGTPGDTGPP. Residues 776 to 787 are compositionally biased toward basic and acidic residues; it reads KGDRGGIGEKGA. Positions 826 to 841 are enriched in low complexity; sequence PPGSRGNPGSRGENGP. The span at 894–903 shows a compositional bias: gly residues; it reads GLKGGRGTQG. P919 bears the 3-hydroxyproline; partial mark. Residues 919–929 show a composition bias toward pro residues; it reads PPGPAGAPGPA. 6 consecutive short sequence motifs (cell attachment site) follow at residues 944–946, 1067–1069, 1070–1072, 1100–1102, 1127–1129, and 1136–1138; these read RGD. A compositionally biased stretch (basic and acidic residues) spans 1063–1072; it reads AVGERGDRGD. The span at 1093–1114 shows a compositional bias: low complexity; that stretch reads APGDAGQRGDPGSRGPIGPPGR. Residues 1127–1141 are compositionally biased toward basic and acidic residues; that stretch reads RGDKGDHGDRGDRGQ. The residue at position 1156 (P1156) is a 3-hydroxyproline; partial. Composition is skewed to pro residues over residues 1171–1181 and 1211–1226; these read PFGPRGPPGPV and EGPP…PGPP. A propeptide spans 1230–1499 (C-terminal propeptide); it reads TAALGDIMGH…GVEIGPVCFV (270 aa). N1262 is a glycosylation site (N-linked (GlcNAc...) asparagine). The Fibrillar collagen NC1 domain occupies 1266-1499; that stretch reads PGVHATLKSL…GVEIGPVCFV (234 aa). Cystine bridges form between C1296-C1328, C1336-C1497, and C1405-C1450. Residues D1314, N1316, Q1317, and D1322 each coordinate Ca(2+). An N-linked (GlcNAc...) asparagine glycan is attached at N1400.

It belongs to the fibrillar collagen family. In terms of assembly, trimers of two alpha 1(V) and one alpha 2(V) chains in most tissues and trimers of one alpha 1(V), one alpha 2(V), and one alpha 3(V) chains in placenta. Prolines at the third position of the tripeptide repeating unit (G-X-P) are hydroxylated in some or all of the chains. Probably 3-hydroxylated on Pro-919 and Pro-1156 by LEPREL1.

The protein localises to the secreted. It localises to the extracellular space. Its subcellular location is the extracellular matrix. Its function is as follows. Type V collagen is a member of group I collagen (fibrillar forming collagen). It is a minor connective tissue component of nearly ubiquitous distribution. Type V collagen binds to DNA, heparan sulfate, thrombospondin, heparin, and insulin. Type V collagen is a key determinant in the assembly of tissue-specific matrices. This Homo sapiens (Human) protein is Collagen alpha-2(V) chain (COL5A2).